Here is a 123-residue protein sequence, read N- to C-terminus: MLQNSELLHEYLPIAIFFGIAVLVSGLIMMLPNLLSTKKYNKDKLEPYECGFAPFSDARSKFDIRFYLVAILFIIFDLEITFLVPWAISLNTIGKIGFFSMMFFLFVLIIGFIYEWTKGALDW.

3 consecutive transmembrane segments (helical) span residues 11–31 (YLPIAIFFGIAVLVSGLIMML), 68–88 (LVAILFIIFDLEITFLVPWAI), and 93–113 (IGKIGFFSMMFFLFVLIIGFI).

It belongs to the complex I subunit 3 family. NDH-1 is composed of 14 different subunits. Subunits NuoA, H, J, K, L, M, N constitute the membrane sector of the complex.

The protein resides in the cell inner membrane. The catalysed reaction is a quinone + NADH + 5 H(+)(in) = a quinol + NAD(+) + 4 H(+)(out). Its function is as follows. NDH-1 shuttles electrons from NADH, via FMN and iron-sulfur (Fe-S) centers, to quinones in the respiratory chain. The immediate electron acceptor for the enzyme in this species is believed to be ubiquinone. Couples the redox reaction to proton translocation (for every two electrons transferred, four hydrogen ions are translocated across the cytoplasmic membrane), and thus conserves the redox energy in a proton gradient. This Rickettsia typhi (strain ATCC VR-144 / Wilmington) protein is NADH-quinone oxidoreductase subunit A.